The following is a 281-amino-acid chain: Diaminopimelate epimerase (281 aa).

The substrate site is built by Asn-13 and Asn-66. The Proton donor role is filled by Cys-75. Substrate-binding positions include 76–77 (GN), Asn-164, Asn-197, and 215–216 (ER). Cys-224 serves as the catalytic Proton acceptor. 225-226 (GT) contributes to the substrate binding site.

It belongs to the diaminopimelate epimerase family. As to quaternary structure, homodimer.

It localises to the cytoplasm. The enzyme catalyses (2S,6S)-2,6-diaminopimelate = meso-2,6-diaminopimelate. It functions in the pathway amino-acid biosynthesis; L-lysine biosynthesis via DAP pathway; DL-2,6-diaminopimelate from LL-2,6-diaminopimelate: step 1/1. Its function is as follows. Catalyzes the stereoinversion of LL-2,6-diaminopimelate (L,L-DAP) to meso-diaminopimelate (meso-DAP), a precursor of L-lysine and an essential component of the bacterial peptidoglycan. This chain is Diaminopimelate epimerase, found in Picosynechococcus sp. (strain ATCC 27264 / PCC 7002 / PR-6) (Agmenellum quadruplicatum).